The sequence spans 154 residues: UPF0756 membrane protein BLi03063/BL00400 (154 aa).

A run of 4 helical transmembrane segments spans residues 8–28 (FLILLLAIALIAKNQSLIIAV), 54–74 (WGVTVITIAVLVPIATGEIGF), 87–107 (WIALGAGILVALIAKNGITLL), and 117–137 (LVFGTILAVALFKGVAVGPLI).

It belongs to the UPF0756 family.

The protein localises to the cell membrane. The chain is UPF0756 membrane protein BLi03063/BL00400 from Bacillus licheniformis (strain ATCC 14580 / DSM 13 / JCM 2505 / CCUG 7422 / NBRC 12200 / NCIMB 9375 / NCTC 10341 / NRRL NRS-1264 / Gibson 46).